The following is a 238-amino-acid chain: MGRKWNNIKEKKAQKDKNTSRIYAKFGKEIYVAAKSGEPNPESNQALRLVLERAKTYSVPNHIIEKAIDKAKGAGDENFDHLRYEGFGPSGSMLIVDALTNNVNRTASDVRAAFGKNGGNMGVSGSVAYMFDHVATFGIEGKSVDEILETLMEQDVDVNDVIDDNGLTIVYAEPDQFAVVQDALRAAGVEEFKVAEFEMLPQTDIELSEADQVTFEKLIDALEDLEDVQNVFHNVDLK.

Belongs to the TACO1 family. YeeN subfamily.

It is found in the cytoplasm. This chain is Probable transcriptional regulatory protein SAB0618, found in Staphylococcus aureus (strain bovine RF122 / ET3-1).